The chain runs to 143 residues: NADH-quinone oxidoreductase subunit A (143 aa).

3 helical membrane-spanning segments follow: residues 12 to 32 (YIVGSVFLCVFMLLCGYFLGG), 61 to 81 (FYLIAMIFVIFDVEGIYLYIW), and 90 to 110 (WIGFIEVCIFVFILLISLIYA).

The protein belongs to the complex I subunit 3 family. NDH-1 is composed of 13 different subunits. Subunits NuoA, H, J, K, L, M, N constitute the membrane sector of the complex.

The protein localises to the cell inner membrane. It carries out the reaction a quinone + NADH + 5 H(+)(in) = a quinol + NAD(+) + 4 H(+)(out). Its function is as follows. NDH-1 shuttles electrons from NADH, via FMN and iron-sulfur (Fe-S) centers, to quinones in the respiratory chain. The immediate electron acceptor for the enzyme in this species is believed to be ubiquinone. Couples the redox reaction to proton translocation (for every two electrons transferred, four hydrogen ions are translocated across the cytoplasmic membrane), and thus conserves the redox energy in a proton gradient. The chain is NADH-quinone oxidoreductase subunit A from Blochmanniella floridana.